We begin with the raw amino-acid sequence, 276 residues long: 2-dehydro-3-deoxyphosphooctonate aldolase (276 aa).

Belongs to the KdsA family.

Its subcellular location is the cytoplasm. The enzyme catalyses D-arabinose 5-phosphate + phosphoenolpyruvate + H2O = 3-deoxy-alpha-D-manno-2-octulosonate-8-phosphate + phosphate. Its pathway is carbohydrate biosynthesis; 3-deoxy-D-manno-octulosonate biosynthesis; 3-deoxy-D-manno-octulosonate from D-ribulose 5-phosphate: step 2/3. The protein operates within bacterial outer membrane biogenesis; lipopolysaccharide biosynthesis. This Stenotrophomonas maltophilia (strain R551-3) protein is 2-dehydro-3-deoxyphosphooctonate aldolase.